The sequence spans 307 residues: Ribosomal RNA small subunit methyltransferase H (307 aa).

Residues 33–35, D51, F82, D96, and Q103 contribute to the S-adenosyl-L-methionine site; that span reads GGY.

Belongs to the methyltransferase superfamily. RsmH family.

It is found in the cytoplasm. It carries out the reaction cytidine(1402) in 16S rRNA + S-adenosyl-L-methionine = N(4)-methylcytidine(1402) in 16S rRNA + S-adenosyl-L-homocysteine + H(+). In terms of biological role, specifically methylates the N4 position of cytidine in position 1402 (C1402) of 16S rRNA. This chain is Ribosomal RNA small subunit methyltransferase H, found in Rickettsia africae (strain ESF-5).